Here is a 300-residue protein sequence, read N- to C-terminus: Protoheme IX farnesyltransferase (300 aa).

8 helical membrane passes run 24-44, 46-66, 94-114, 118-138, 146-166, 172-192, 224-244, and 278-298; these read VTQL…PGMV, WHVL…AFAI, PQIL…LYTF, LTMW…TLLL, IVIG…AVTG, AWIL…VLAL, VILF…VVYL, and IVYL…RPLL.

This sequence belongs to the UbiA prenyltransferase family. Protoheme IX farnesyltransferase subfamily.

It is found in the cell inner membrane. It catalyses the reaction heme b + (2E,6E)-farnesyl diphosphate + H2O = Fe(II)-heme o + diphosphate. Its pathway is porphyrin-containing compound metabolism; heme O biosynthesis; heme O from protoheme: step 1/1. Converts heme B (protoheme IX) to heme O by substitution of the vinyl group on carbon 2 of heme B porphyrin ring with a hydroxyethyl farnesyl side group. The protein is Protoheme IX farnesyltransferase of Burkholderia ambifaria (strain MC40-6).